Consider the following 156-residue polypeptide: Arginine repressor (156 aa).

Belongs to the ArgR family.

It is found in the cytoplasm. The protein operates within amino-acid biosynthesis; L-arginine biosynthesis [regulation]. In terms of biological role, regulates arginine biosynthesis genes. This is Arginine repressor from Escherichia coli O81 (strain ED1a).